Here is a 293-residue protein sequence, read N- to C-terminus: 4-hydroxy-tetrahydrodipicolinate synthase (293 aa).

Pyruvate is bound at residue Thr45. The active-site Proton donor/acceptor is Tyr133. Lys161 (schiff-base intermediate with substrate) is an active-site residue. Ile204 is a binding site for pyruvate.

The protein belongs to the DapA family. In terms of assembly, homotetramer; dimer of dimers.

Its subcellular location is the cytoplasm. The catalysed reaction is L-aspartate 4-semialdehyde + pyruvate = (2S,4S)-4-hydroxy-2,3,4,5-tetrahydrodipicolinate + H2O + H(+). The protein operates within amino-acid biosynthesis; L-lysine biosynthesis via DAP pathway; (S)-tetrahydrodipicolinate from L-aspartate: step 3/4. Catalyzes the condensation of (S)-aspartate-beta-semialdehyde [(S)-ASA] and pyruvate to 4-hydroxy-tetrahydrodipicolinate (HTPA). The polypeptide is 4-hydroxy-tetrahydrodipicolinate synthase (Yersinia pseudotuberculosis serotype I (strain IP32953)).